Consider the following 50-residue polypeptide: Protein PsbN (50 aa).

The helical transmembrane segment at 14–34 (VAVTILAVLLALTGFGLWTAF) threads the bilayer.

Belongs to the PsbN family.

Its subcellular location is the cellular thylakoid membrane. Functionally, may play a role in photosystem I and II biogenesis. In Prochlorococcus marinus subsp. pastoris (strain CCMP1986 / NIES-2087 / MED4), this protein is Protein PsbN.